The sequence spans 427 residues: 3-phosphoshikimate 1-carboxyvinyltransferase (427 aa).

3-phosphoshikimate-binding residues include Lys-22, Ser-23, and Arg-27. Lys-22 contacts phosphoenolpyruvate. Phosphoenolpyruvate-binding residues include Gly-96 and Arg-124. Residues Ser-169, Ser-170, Gln-171, Ser-197, Asp-313, Asn-336, and Lys-340 each contribute to the 3-phosphoshikimate site. Gln-171 is a phosphoenolpyruvate binding site. Asp-313 serves as the catalytic Proton acceptor. Arg-344, Arg-386, and Lys-411 together coordinate phosphoenolpyruvate.

It belongs to the EPSP synthase family. In terms of assembly, monomer.

It is found in the cytoplasm. It carries out the reaction 3-phosphoshikimate + phosphoenolpyruvate = 5-O-(1-carboxyvinyl)-3-phosphoshikimate + phosphate. It functions in the pathway metabolic intermediate biosynthesis; chorismate biosynthesis; chorismate from D-erythrose 4-phosphate and phosphoenolpyruvate: step 6/7. Its function is as follows. Catalyzes the transfer of the enolpyruvyl moiety of phosphoenolpyruvate (PEP) to the 5-hydroxyl of shikimate-3-phosphate (S3P) to produce enolpyruvyl shikimate-3-phosphate and inorganic phosphate. This chain is 3-phosphoshikimate 1-carboxyvinyltransferase, found in Salmonella schwarzengrund (strain CVM19633).